Reading from the N-terminus, the 248-residue chain is Triosephosphate isomerase (248 aa).

Substrate contacts are provided by Asn-10 and Lys-12. His-95 (electrophile) is an active-site residue. The active-site Proton acceptor is the Glu-165.

It belongs to the triosephosphate isomerase family. Homodimer.

It carries out the reaction D-glyceraldehyde 3-phosphate = dihydroxyacetone phosphate. It functions in the pathway carbohydrate biosynthesis; gluconeogenesis. Its pathway is carbohydrate degradation; glycolysis; D-glyceraldehyde 3-phosphate from glycerone phosphate: step 1/1. The chain is Triosephosphate isomerase (TPI1) from Zygosaccharomyces bailii.